The chain runs to 101 residues: Small ribosomal subunit protein uS14A (101 aa).

Disordered stretches follow at residues 1–21 (MAKK…AHHA) and 49–73 (QRLP…PRGT). Composition is skewed to basic and acidic residues over residues 8-21 (AKNE…AHHA) and 61-70 (RNRDAADGRP).

The protein belongs to the universal ribosomal protein uS14 family. Part of the 30S ribosomal subunit. Contacts proteins S3 and S10.

Binds 16S rRNA, required for the assembly of 30S particles and may also be responsible for determining the conformation of the 16S rRNA at the A site. This Kineococcus radiotolerans (strain ATCC BAA-149 / DSM 14245 / SRS30216) protein is Small ribosomal subunit protein uS14A.